The chain runs to 122 residues: uncharacterized protein (122 aa).

Residues 1–22 (MNMMRIFYIGLSGVGMMFSSMA) form the signal peptide.

This is an uncharacterized protein from Escherichia coli (strain K12).